Reading from the N-terminus, the 457-residue chain is Cysteine desulfurase (457 aa).

Pyridoxal 5'-phosphate contacts are provided by alanine 127, threonine 128, glutamine 235, serine 255, and histidine 257. The residue at position 258 (lysine 258) is an N6-(pyridoxal phosphate)lysine. Residue threonine 295 participates in pyridoxal 5'-phosphate binding. Catalysis depends on cysteine 381, which acts as the Cysteine persulfide intermediate. A [2Fe-2S] cluster-binding site is contributed by cysteine 381. Cysteine 381 is a Zn(2+) binding site. Position 381 is a cysteine persulfide (cysteine 381).

The protein belongs to the class-V pyridoxal-phosphate-dependent aminotransferase family. NifS/IscS subfamily. In terms of assembly, homodimer. Component of the mitochondrial core iron-sulfur cluster (ISC) complex composed of NFS1, LYRM4, NDUFAB1, ISCU, FXN, and FDX2; this complex is a heterohexamer containing two copies of each monomer. Component of cyteine desulfurase complex composed of NFS1, LYRM4 and NDUFAB1; this complex contributes to the activation of cysteine desulfurase activity and NFS1 stabilization. Interacts (homodimer form) with ISCU (D-state); each monomer interacts with the C-terminal regions of each NFS1 monomer. Interacts with HSPA9. Interacts (via homodimer form) with FDX2. Interacts (via homodimer form) with FXN. Interacts with LYRM4. Component of a complex composed of FXN, NFS1, LYRM4 and ISCU. As to quaternary structure, monomer. Homodimer. Oligomer. Interacts with ISCU. Component of the cysteine desulfurase complex composed of NFS1 and LYRM4; this complex contributes to the activation of cysteine desulfurase activity. Interacts with MOCS3. Pyridoxal 5'-phosphate serves as cofactor. Post-translationally, N-gluconoylated. Cysteine persulfide intermediate is reduced by thiol-containing molecules like glutathione and L-cysteine. Persulfide reduction is a rate-limiting step of cysteine desulfurase catalytic cycle. As to expression, predominantly expressed in heart and skeletal muscle. Also found in brain, liver and pancreas.

Its subcellular location is the mitochondrion. The protein resides in the cytoplasm. It is found in the nucleus. It localises to the cytoskeleton. The protein localises to the microtubule organizing center. Its subcellular location is the centrosome. The enzyme catalyses (sulfur carrier)-H + L-cysteine = (sulfur carrier)-SH + L-alanine. The catalysed reaction is L-cysteinyl-[cysteine desulfurase] + L-cysteine = S-sulfanyl-L-cysteinyl-[cysteine desulfurase] + L-alanine. Its activity is regulated as follows. Active only in complex with LYRM4. Cysteine desulfurase, of the core iron-sulfur cluster (ISC) assembly complex, that catalyzes the desulfuration of L-cysteine to L-alanine, as component of the cysteine desulfurase complex, leading to the formation of a cysteine persulfide intermediate at the active site cysteine residue and participates in the [2Fe-2S] clusters assembly on the scaffolding protein ISCU. The persulfide is then transferred on the flexible Cys loop from the catalytic site of NFS1 to the surface of NFS1. After the NFS1-linked persulfide sulfur is transferred to one of the conserved Cys residues of the scaffold, a reaction assisted by FXN. The core iron-sulfur cluster (ISC) assembly complex is involved in the de novo synthesis of a [2Fe-2S] cluster, the first step of the mitochondrial iron-sulfur protein biogenesis. This process is initiated by the cysteine desulfurase complex (NFS1:LYRM4:NDUFAB1) that produces persulfide which is delivered on the scaffold protein ISCU in a FXN-dependent manner. Then this complex is stabilized by FDX2 which provides reducing equivalents to accomplish the [2Fe-2S] cluster assembly. Finally, the [2Fe-2S] cluster is transferred from ISCU to chaperone proteins, including HSCB, HSPA9 and GLRX5. Functionally, may catalyze the desulfuration of L-cysteine to L-alanine as component of the cysteine desulfurase complex (NFS1:LYRM4), leading to the formation of a cysteine persulfide intermediate. Acts as a sulfur donor for MOCS3 by transferring the sulfur of the cysteine persulfide intermediate on MOCS3. The protein is Cysteine desulfurase of Homo sapiens (Human).